A 1117-amino-acid polypeptide reads, in one-letter code: Rhoptry apical surface protein 3 (1117 aa).

Over residues 1-12 the composition is skewed to polar residues; the sequence is MENRPRQQTSGH. Disordered stretches follow at residues 1 to 27, 47 to 243, 258 to 301, 325 to 398, 415 to 442, 490 to 572, 600 to 619, and 654 to 736; these read MENR…SRPG, NHER…SHFT, DSER…NKGI, SDFK…SLST, WNHA…FLAA, AEAV…ESEL, RPLL…ELRS, and QDGT…RLQG. Composition is skewed to basic and acidic residues over residues 83–100, 197–209, and 275–300; these read DSNH…DSQK, TPLR…RHVS, and MKPK…DNKG. 2 stretches are compositionally biased toward low complexity: residues 418-442 and 490-508; these read ASPG…FLAA and AEAV…GDSS. Residues 510–520 show a composition bias toward basic and acidic residues; sequence ESDHSGRERSR. Residues 530-540 show a composition bias toward polar residues; sequence NEITTMRSQRS. Residues 546–555 are compositionally biased toward basic and acidic residues; the sequence is FSREPERESD. Residues 557–569 show a composition bias toward polar residues; the sequence is GEMTPTGETSGSE. Residues 724 to 734 show a composition bias toward basic and acidic residues; sequence DADRKQEEKRL. Positions 752-788 constitute a BSD domain; sequence MLSVDRRLRKLHSDTAVRRMGETEFWKLYFYQVFLLM. The segment covering 829–838 has biased composition (polar residues); sequence QTSGFTESDT. Disordered stretches follow at residues 829–848, 858–891, 909–964, 1031–1066, and 1095–1117; these read QTSG…YGFA, IIPP…APEQ, RSPS…GDSP, SSSQ…PSHL, and GTCG…GARA. The span at 839-848 shows a compositional bias: low complexity; it reads SSPSPSYGFA. Residues 909-931 show a composition bias toward low complexity; that stretch reads RSPSLSSSSSGTTSVSARGTGSS. The segment covering 1031–1044 has biased composition (polar residues); that stretch reads SSSQVNGRVSTSRG. Basic and acidic residues-rich tracts occupy residues 1046–1062 and 1108–1117; these read MGED…RLEG and KGKEVQGARA.

Interacts with RASP2.

It localises to the cytoplasmic vesicle. It is found in the secretory vesicle. Its subcellular location is the rhoptry membrane. This is Rhoptry apical surface protein 3 from Toxoplasma gondii (strain ATCC 50853 / GT1).